Reading from the N-terminus, the 512-residue chain is NADH-quinone oxidoreductase subunit M (512 aa).

14 helical membrane passes run 3–23 (NLLSIITFLPLAAAAVLAVVS), 36–56 (WVALTATVVTFLVSLLLLAGF), 84–104 (ISILFVMLTTFLMPLTIASAW), 112–132 (EYMIAFLVLEALMIGVFVALD), 133–153 (LVLFYLFFEAGLIPMFLIIGI), 166–186 (FFLYTFLGSVLMLVAMVAMYM), 208–228 (FLGWWTLTGGVQTLLFLAFFA), 251–271 (PTAGSVVLAAVLLKMGGYGFL), 285–305 (MTTFVFILSAVAIVYTSLVAL), 313–333 (LIAYSSVAHMGYVTMGIFAAN), 341–361 (IFQMLSHGFISGALFLCVGVI), 384–404 (ALIFMFFTMANVGLPGTSGFV), 419–439 (WVALFATSGVILSAAYALWLY), and 464–484 (AIFAPLVAMTLLLGVYPSLVT).

It belongs to the complex I subunit 4 family.

The protein localises to the cell membrane. It carries out the reaction a quinone + NADH + 5 H(+)(in) = a quinol + NAD(+) + 4 H(+)(out). In terms of biological role, NDH-1 shuttles electrons from NADH, via FMN and iron-sulfur (Fe-S) centers, to quinones in the respiratory chain. The immediate electron acceptor for the enzyme in this species is believed to be ubiquinone. Couples the redox reaction to proton translocation (for every two electrons transferred, four hydrogen ions are translocated across the cytoplasmic membrane), and thus conserves the redox energy in a proton gradient. The protein is NADH-quinone oxidoreductase subunit M (nuoM) of Rhodobacter capsulatus (Rhodopseudomonas capsulata).